The primary structure comprises 46 residues: Large ribosomal subunit protein bL36 (46 aa).

The protein belongs to the bacterial ribosomal protein bL36 family.

In Escherichia coli O7:K1 (strain IAI39 / ExPEC), this protein is Large ribosomal subunit protein bL36.